The following is a 325-amino-acid chain: DNA-directed RNA polymerase subunit alpha (325 aa).

The interval 1-238 (MSLKSLLKGF…EHLTVFINFE (238 aa)) is alpha N-terminal domain (alpha-NTD). The tract at residues 254–325 (KLKASLSKHV…LGLSFGMRDF (72 aa)) is alpha C-terminal domain (alpha-CTD).

Belongs to the RNA polymerase alpha chain family. As to quaternary structure, homodimer. The RNAP catalytic core consists of 2 alpha, 1 beta, 1 beta' and 1 omega subunit. When a sigma factor is associated with the core the holoenzyme is formed, which can initiate transcription.

It carries out the reaction RNA(n) + a ribonucleoside 5'-triphosphate = RNA(n+1) + diphosphate. In terms of biological role, DNA-dependent RNA polymerase catalyzes the transcription of DNA into RNA using the four ribonucleoside triphosphates as substrates. The polypeptide is DNA-directed RNA polymerase subunit alpha (Leptospira borgpetersenii serovar Hardjo-bovis (strain JB197)).